The sequence spans 258 residues: Small ribosomal subunit protein uS2 (258 aa).

Belongs to the universal ribosomal protein uS2 family.

The chain is Small ribosomal subunit protein uS2 from Streptococcus suis (strain 98HAH33).